The following is a 385-amino-acid chain: Rubredoxin-NAD(+) reductase (385 aa).

FAD contacts are provided by residues 8–11 (AGTA), 32–33 (SR), Ile-79, Glu-156, Asp-275, and Ile-293.

The protein belongs to the FAD-dependent oxidoreductase family. As to quaternary structure, homodimer. It depends on FAD as a cofactor.

The protein resides in the cytoplasm. It carries out the reaction 2 reduced [rubredoxin] + NAD(+) + H(+) = 2 oxidized [rubredoxin] + NADH. The protein operates within hydrocarbon metabolism; alkane degradation. Its function is as follows. Involved in the hydrocarbon hydroxylating system, which transfers electrons from NADH to rubredoxin reductase and then through rubredoxin to alkane 1 monooxygenase. This chain is Rubredoxin-NAD(+) reductase (alkT), found in Pseudomonas putida (Arthrobacter siderocapsulatus).